Reading from the N-terminus, the 353-residue chain is Protein RecA (353 aa).

80–87 is a binding site for ATP; the sequence is GPESSGKT.

Belongs to the RecA family.

Its subcellular location is the cytoplasm. Its function is as follows. Can catalyze the hydrolysis of ATP in the presence of single-stranded DNA, the ATP-dependent uptake of single-stranded DNA by duplex DNA, and the ATP-dependent hybridization of homologous single-stranded DNAs. It interacts with LexA causing its activation and leading to its autocatalytic cleavage. The sequence is that of Protein RecA from Chlorobium chlorochromatii (strain CaD3).